The chain runs to 303 residues: N-acetyl-D-glucosamine kinase (303 aa).

Residues 4 to 11 and 133 to 140 each bind ATP; these read GFDIGGTK and GVGGGLVL. Positions 157, 177, 179, and 184 each coordinate Zn(2+).

Belongs to the ROK (NagC/XylR) family. NagK subfamily.

The enzyme catalyses N-acetyl-D-glucosamine + ATP = N-acetyl-D-glucosamine 6-phosphate + ADP + H(+). Its pathway is cell wall biogenesis; peptidoglycan recycling. Its function is as follows. Catalyzes the phosphorylation of N-acetyl-D-glucosamine (GlcNAc) derived from cell-wall degradation, yielding GlcNAc-6-P. This Citrobacter koseri (strain ATCC BAA-895 / CDC 4225-83 / SGSC4696) protein is N-acetyl-D-glucosamine kinase.